A 70-amino-acid polypeptide reads, in one-letter code: Gas vesicle protein A (70 aa).

This sequence belongs to the gas vesicle GvpA family. As to quaternary structure, the gas vesicle shell is 2 nm thick and consists of a single layer of this protein. It forms helical ribs nearly perpendicular to the long axis of the vesicle.

It is found in the gas vesicle shell. In terms of biological role, gas vesicles are hollow, gas filled proteinaceous nanostructures found in some microorganisms. During planktonic growth they allow positioning of the organism at a favorable depth for light or nutrient acquisition. GvpA forms the protein shell. The protein is Gas vesicle protein A of Bradyrhizobium sp. (strain ORS 278).